The sequence spans 273 residues: Cyclic di-AMP synthase CdaA (273 aa).

The next 3 helical transmembrane spans lie at 12-32 (LGNAVDILLVWYVIYKLIMVI), 40-60 (LLKGIVVIVLVRMASQYLGLS), and 61-81 (TLQWLMDQAITWGFLAIIIIF). The DAC domain maps to 82 to 242 (QPELRRALEQ…NGDLHRELTE (161 aa)).

It belongs to the adenylate cyclase family. DacA/CdaA subfamily. In terms of assembly, probably a homodimer. Interacts with CdaR. May interact with GlmM.

The protein resides in the cell membrane. It catalyses the reaction 2 ATP = 3',3'-c-di-AMP + 2 diphosphate. Its activity is regulated as follows. DAC activity is stimulated about 20-fold in E.coli by coexpression with CdaR. Functionally, one of 3 paralogous diadenylate cyclases (DAC) in this bacteria, catalyzing the condensation of 2 ATP molecules into cyclic di-AMP (c-di-AMP). Upon expression in E.coli leads to c-di-AMP synthesis. Probably the main producer of c-di-AMP for the cell; is probably implicated in control of peptidoglycan synthesis. In B.subtilis c-di-AMP is a second messenger that mediates growth, DNA repair and cell wall homeostasis; it is toxic when present in excess. The protein is Cyclic di-AMP synthase CdaA of Bacillus subtilis (strain 168).